The following is a 563-amino-acid chain: Phospholipase B-like protein F (563 aa).

The signal sequence occupies residues 1–21 (MKIINSFVFIFVLLFVFNTNA). Residues asparagine 85, asparagine 107, asparagine 118, asparagine 121, asparagine 208, asparagine 312, and asparagine 537 are each glycosylated (N-linked (GlcNAc...) asparagine).

This sequence belongs to the phospholipase B-like family.

The protein localises to the secreted. Functionally, probable phospholipase. This is Phospholipase B-like protein F (plbF) from Dictyostelium discoideum (Social amoeba).